The primary structure comprises 548 residues: ATP synthase subunit alpha (548 aa).

172-179 (GDRKTGKT) lines the ATP pocket.

Belongs to the ATPase alpha/beta chains family. As to quaternary structure, F-type ATPases have 2 components, CF(1) - the catalytic core - and CF(0) - the membrane proton channel. CF(1) has five subunits: alpha(3), beta(3), gamma(1), delta(1), epsilon(1). CF(0) has three main subunits: a(1), b(2) and c(9-12). The alpha and beta chains form an alternating ring which encloses part of the gamma chain. CF(1) is attached to CF(0) by a central stalk formed by the gamma and epsilon chains, while a peripheral stalk is formed by the delta and b chains.

The protein localises to the cell membrane. The catalysed reaction is ATP + H2O + 4 H(+)(in) = ADP + phosphate + 5 H(+)(out). In terms of biological role, produces ATP from ADP in the presence of a proton gradient across the membrane. The alpha chain is a regulatory subunit. This chain is ATP synthase subunit alpha, found in Mycobacteroides abscessus (strain ATCC 19977 / DSM 44196 / CCUG 20993 / CIP 104536 / JCM 13569 / NCTC 13031 / TMC 1543 / L948) (Mycobacterium abscessus).